Consider the following 172-residue polypeptide: Peptide deformylase-like (172 aa).

E134 is an active-site residue.

It belongs to the polypeptide deformylase family.

The chain is Peptide deformylase-like from Rhizobium meliloti (strain 1021) (Ensifer meliloti).